A 192-amino-acid chain; its full sequence is Rho-related protein racC (192 aa).

Residue 13-20 (GDGAVGKT) participates in GTP binding. The short motif at 35-43 (YIPTVFDNY) is the Effector region element. GTP-binding positions include 60–64 (DTAGQ) and 118–121 (TKLD). Cys189 carries the post-translational modification Cysteine methyl ester. The S-geranylgeranyl cysteine moiety is linked to residue Cys189. The propeptide at 190 to 192 (IVM) is removed in mature form.

Belongs to the small GTPase superfamily. Rho family. As to quaternary structure, interacts with pakB.

The protein resides in the cell membrane. This chain is Rho-related protein racC (racC), found in Dictyostelium discoideum (Social amoeba).